The sequence spans 241 residues: Orotidine 5'-phosphate decarboxylase (241 aa).

Residues Asp-15, Lys-36, 63 to 72 (DLKFHDIPNT), Thr-127, Arg-189, Gln-198, Gly-218, and Arg-219 each bind substrate. The active-site Proton donor is Lys-65.

Belongs to the OMP decarboxylase family. Type 1 subfamily. Homodimer.

The catalysed reaction is orotidine 5'-phosphate + H(+) = UMP + CO2. It functions in the pathway pyrimidine metabolism; UMP biosynthesis via de novo pathway; UMP from orotate: step 2/2. Functionally, catalyzes the decarboxylation of orotidine 5'-monophosphate (OMP) to uridine 5'-monophosphate (UMP). The sequence is that of Orotidine 5'-phosphate decarboxylase from Prochlorococcus marinus (strain MIT 9211).